The sequence spans 457 residues: Multidrug resistance protein MdtK (457 aa).

12 consecutive transmembrane segments (helical) span residues 11-31 (LLAL…MGVV), 53-73 (IWLP…PIIA), 93-113 (WLAI…KFLI), 127-147 (AVGF…YQVL), 160-180 (GMVI…IFIY), 188-208 (LGGV…FLLM), 243-263 (LPIA…ALLI), 280-300 (FSSL…IRVG), 316-336 (YTGI…SIIL), 357-377 (LMLF…GAGV), 387-407 (IFYI…YILG), and 418-438 (PQGF…MIFA).

Belongs to the multi antimicrobial extrusion (MATE) (TC 2.A.66.1) family. MdtK subfamily.

It localises to the cell inner membrane. Its function is as follows. Multidrug efflux pump that functions probably as a Na(+)/drug antiporter. The protein is Multidrug resistance protein MdtK of Photorhabdus laumondii subsp. laumondii (strain DSM 15139 / CIP 105565 / TT01) (Photorhabdus luminescens subsp. laumondii).